The chain runs to 109 residues: Juvenile hormone esterase, isoform A (109 aa).

It belongs to the type-B carboxylesterase/lipase family. As to expression, fat body, the site of their biosynthesis, and the hemolymph where it is secreted.

It carries out the reaction juvenile hormone I + H2O = juvenile hormone I carboxylate + methanol + H(+). It catalyses the reaction juvenile hormone III + H2O = juvenile hormone III carboxylate + methanol + H(+). In terms of biological role, JH esterase plays a crucial role in the decrease of JH activity in lepidopteran insects, by hydrolyzing the methyl ester of JH. It is also involved in the transport of JH. This chain is Juvenile hormone esterase, isoform A, found in Trichoplusia ni (Cabbage looper).